Here is a 359-residue protein sequence, read N- to C-terminus: Biotin synthase (359 aa).

One can recognise a Radical SAM core domain in the interval 47–276; sequence HHGRRVRIHV…EADLRMAGGR (230 aa). Cys65, Cys69, and Cys72 together coordinate [4Fe-4S] cluster. [2Fe-2S] cluster is bound by residues Cys109, Cys141, Cys201, and Arg271. The interval 320–359 is disordered; the sequence is EPVIVEDGPERQTPATADDTPSGDPEAADRRRQPSAGPAG.

It belongs to the radical SAM superfamily. Biotin synthase family. In terms of assembly, homodimer. [4Fe-4S] cluster is required as a cofactor. [2Fe-2S] cluster serves as cofactor.

It catalyses the reaction (4R,5S)-dethiobiotin + (sulfur carrier)-SH + 2 reduced [2Fe-2S]-[ferredoxin] + 2 S-adenosyl-L-methionine = (sulfur carrier)-H + biotin + 2 5'-deoxyadenosine + 2 L-methionine + 2 oxidized [2Fe-2S]-[ferredoxin]. Its pathway is cofactor biosynthesis; biotin biosynthesis; biotin from 7,8-diaminononanoate: step 2/2. Functionally, catalyzes the conversion of dethiobiotin (DTB) to biotin by the insertion of a sulfur atom into dethiobiotin via a radical-based mechanism. The protein is Biotin synthase of Salinibacter ruber (strain DSM 13855 / M31).